Reading from the N-terminus, the 320-residue chain is Ferrochelatase (320 aa).

Histidine 194 and glutamate 275 together coordinate Fe cation.

This sequence belongs to the ferrochelatase family.

It is found in the cytoplasm. The catalysed reaction is heme b + 2 H(+) = protoporphyrin IX + Fe(2+). The protein operates within porphyrin-containing compound metabolism; protoheme biosynthesis; protoheme from protoporphyrin-IX: step 1/1. Functionally, catalyzes the ferrous insertion into protoporphyrin IX. This Pectobacterium atrosepticum (strain SCRI 1043 / ATCC BAA-672) (Erwinia carotovora subsp. atroseptica) protein is Ferrochelatase.